The sequence spans 407 residues: DNA-directed RNA polymerase subunit Rpo1C (407 aa).

It belongs to the RNA polymerase beta' chain family. As to quaternary structure, part of the RNA polymerase complex.

The protein resides in the cytoplasm. It catalyses the reaction RNA(n) + a ribonucleoside 5'-triphosphate = RNA(n+1) + diphosphate. DNA-dependent RNA polymerase (RNAP) catalyzes the transcription of DNA into RNA using the four ribonucleoside triphosphates as substrates. Forms part of the jaw domain. In Aeropyrum pernix (strain ATCC 700893 / DSM 11879 / JCM 9820 / NBRC 100138 / K1), this protein is DNA-directed RNA polymerase subunit Rpo1C.